We begin with the raw amino-acid sequence, 273 residues long: Dermonecrotic toxin LhSicTox-alphaIA2aii (273 aa).

The active site involves histidine 5. Mg(2+) contacts are provided by glutamate 25 and aspartate 27. The Nucleophile role is filled by histidine 41. Cystine bridges form between cysteine 45–cysteine 51 and cysteine 47–cysteine 190. Aspartate 85 contacts Mg(2+).

The protein belongs to the arthropod phospholipase D family. Class II subfamily. Mg(2+) is required as a cofactor. As to expression, expressed by the venom gland.

It localises to the secreted. It carries out the reaction an N-(acyl)-sphingosylphosphocholine = an N-(acyl)-sphingosyl-1,3-cyclic phosphate + choline. The catalysed reaction is an N-(acyl)-sphingosylphosphoethanolamine = an N-(acyl)-sphingosyl-1,3-cyclic phosphate + ethanolamine. It catalyses the reaction a 1-acyl-sn-glycero-3-phosphocholine = a 1-acyl-sn-glycero-2,3-cyclic phosphate + choline. The enzyme catalyses a 1-acyl-sn-glycero-3-phosphoethanolamine = a 1-acyl-sn-glycero-2,3-cyclic phosphate + ethanolamine. Functionally, dermonecrotic toxins cleave the phosphodiester linkage between the phosphate and headgroup of certain phospholipids (sphingolipid and lysolipid substrates), forming an alcohol (often choline) and a cyclic phosphate. This toxin acts on sphingomyelin (SM). It may also act on ceramide phosphoethanolamine (CPE), lysophosphatidylcholine (LPC) and lysophosphatidylethanolamine (LPE), but not on lysophosphatidylserine (LPS), and lysophosphatidylglycerol (LPG). It acts by transphosphatidylation, releasing exclusively cyclic phosphate products as second products. Induces dermonecrosis, hemolysis, increased vascular permeability, edema, inflammatory response, and platelet aggregation. This Loxosceles hirsuta (Recluse spider) protein is Dermonecrotic toxin LhSicTox-alphaIA2aii.